A 161-amino-acid chain; its full sequence is Probable calcium-binding protein CML16 (161 aa).

EF-hand domains follow at residues 8-43 (DQIK…LGIK), 44-79 (PRGD…DINE), 83-118 (INQE…MGHP), and 119-154 (LTYR…SAAD). Positions 21, 23, 25, 27, 32, 57, 59, 61, 63, 68, 96, 98, 100, 102, 107, 132, 134, 136, and 143 each coordinate Ca(2+).

Functionally, potential calcium sensor. In Arabidopsis thaliana (Mouse-ear cress), this protein is Probable calcium-binding protein CML16 (CML16).